We begin with the raw amino-acid sequence, 862 residues long: uncharacterized protein (862 aa).

Positions 1–25 (MKPRPYSVFLFLHIVFYSLLSAVNG) are cleaved as a signal peptide. At 26–61 (SPSLDYFETCSNFVPRAGIPTFSPYAVIKNFDEVNR) the chain is on the lumenal side. A helical membrane pass occupies residues 62–82 (MYYIQVVGNLSGVITIVGGNG). Over 83-187 (SHIHAASVYS…STTLYYFYPV (105 aa)) the chain is Cytoplasmic. Residues 188-208 (ISYLVVVSLAYVSFSIIYALF) traverse the membrane as a helical segment. The Lumenal portion of the chain corresponds to 209–230 (LNPWTGSLDPFKSIFNFNMDPD). A helical transmembrane segment spans residues 231–250 (ALRLTSLGFFDFVQYLQFAV). Over 251-256 (STAQVS) the chain is Cytoplasmic. A helical transmembrane segment spans residues 257–277 (VMFPKFYINIMAALSWGTALF). The Lumenal portion of the chain corresponds to 278–329 (RFPIFSEPAEYQFADFADLSVASSSYADYLPKSYGMYSFLDSIGIGTACWLP). Residues 330–350 (FLIVMVIYLFAALFVALLVIF) form a helical membrane-spanning segment. Residues 351-372 (LKWLMSRIFNETIAETRWDTWS) lie on the Cytoplasmic side of the membrane. The chain crosses the membrane as a helical span at residues 373-393 (FIAGSLIRLYFLTYFPTVAYM). The Lumenal segment spans residues 394 to 404 (SFQFVAPPTGY). The chain crosses the membrane as a helical span at residues 405 to 425 (EIIPVLWFIFFGIFIPVYLYM). The Cytoplasmic portion of the chain corresponds to 426-457 (NLAFVEPSSKLLEDQTYLHLFGSIYNSFREER). The helical transmembrane segment at 458–480 (VMFWIFPIAVQFMRGITVGVIGS) threads the bilayer. The Lumenal portion of the chain corresponds to 481–483 (SGS). Residues 484–503 (AQLAIFFILEVANVVAYAYV) traverse the membrane as a helical segment. At 504–514 (RPHFPQTSMNT) the chain is on the cytoplasmic side. The chain crosses the membrane as a helical span at residues 515–535 (LNTFISTMRLITVILMIPLDP). Residues 536–545 (RLKVLGISRD) lie on the Lumenal side of the membrane. The chain crosses the membrane as a helical span at residues 546–566 (LLAYAILFIHIMVCILFLLLS). Over 567-862 (TQRFMEVSAR…AESAWSIPHP (296 aa)) the chain is Cytoplasmic. A compositionally biased stretch (polar residues) spans 668–686 (QASSLVPSKNNTASSSSLM). Disordered regions lie at residues 668 to 717 (QASS…SVRK) and 815 to 862 (VLRS…IPHP). The segment covering 689-700 (SPVTPSSPYSTS) has biased composition (low complexity). The span at 834 to 850 (EPSRDEQYSMERKKTDD) shows a compositional bias: basic and acidic residues.

This sequence belongs to the transient receptor potential (TRP) ion channel family.

The protein resides in the cytoplasm. The protein localises to the golgi apparatus membrane. This is an uncharacterized protein from Schizosaccharomyces pombe (strain 972 / ATCC 24843) (Fission yeast).